Here is a 1372-residue protein sequence, read N- to C-terminus: MVSLRDNIEVQPLSHNKRVRKNFGHINLVADIPNLIEIQKNSYEKNFLQLDTKDSERKNKGLQSILNSIFPISDPSNIANLEFVKYEFDTPKYDVEECTQRSLSYDSALKVTLRLSIWDIDEDTGSREIKGIKEQQVYMGNIPLMTKNGTFIINGTERVVVSQMHRSPGVFFYHDEGKVHSSRKLLYSARVIPYRGSWLDLEFDAKDIIYFRIDRKRKLYATTLLKAIGMSTEEIIKFYYDSVNYKVVKNKGWAVKFMPSHITAHRLTSDLIDADTGNVLLKAGQKITPRLAKKYAGEGLNNILVSHEALIGKYLSEDLKDPESDEILAKIGEMITVELLSVISDLKIKNISVLVINPQSGPYIRNTLFSDKNQDRESALFDIFRVLRPGEPANIEAAESLFYNLFFDPERYDLSEVGRIKMNSRLELNISDETTVLTTDDIKNILRVLVELKDRKGIIDDIDHLGNRRVRSVGELIENQFRIGLVRMEKSVVERMSAGDIDTVMPHDLVNSKILVSVVKEFFSTSQLSQFMDQTNPLSEITHKRRLSALGPGGLSRDRAGFEVRDVHPTHYGRICPIETPEGQNIGLINSMATYARINKHGFIESPYRKVKDGHVTDEVVYLSAIEEGKYKIGQANSKVDKDGILQGEFINCRVEGGNFVMVEPHEVDFIDVTPMQVVSVAASLIPFLENDDANRALMGSNMQRQAVPLIKTDAPFVGTGVEGVVAKDSGASVLALNDGIVEQVDSNRIVIRAIGQKTESAPSVDIYNLLKFQKSNHNTCINQKPLVKVGHYVKKNDIIADGPSTDNGEIALGRNVLVAFLPWNGYNFEDSILISERIVKEDVFTSVHIEEFEVIARDTRLGPEEITRDIPNVSEEALRHLDEVGIIYVGAEVKAGDILVGKVTPKSESPITPEEKLLRAIFGEKAFDVKDSSLHVPSGVSGTVVEVRVFSRRGVEKDQRAIAIEKQQIEKLAKDRDDELEIIEHFVFSWLEKLLVGQVSINGPKTVKTGQTITSEILKGLSKGQLWQFTVEDANVMNEIEQLKGHYDGKKEALNKRFATKVEKLQSGDDLPQGALKVVKVFIATKHKLQPGDKMAGRHGNKGVISRIVPEEDMPFLEDGTVVDIVLNPLGLPSRMNIGQVLETHLGWASVNLAKKIAGLVEEHKTKHASIEKIKKFLIELYGENINHILEKSDEEIISFCNEAAKGVYFATPVFDGAKVEDVKDMLRLAGQDLSGQVKLIDGRTGEYFDRLVTVGQKYLLKLHHLVDNKIHSRSIGPYSLVTQQPLGGKSHFGGQRFGEMECWALQAYGAAYTLQEMLTVKSDDVNGRIKIYDSIVRGENNFESGIPESFNVMIKEFRSLCLNVKLEVTS.

Belongs to the RNA polymerase beta chain family. As to quaternary structure, the RNAP catalytic core consists of 2 alpha, 1 beta, 1 beta' and 1 omega subunit. When a sigma factor is associated with the core the holoenzyme is formed, which can initiate transcription.

It catalyses the reaction RNA(n) + a ribonucleoside 5'-triphosphate = RNA(n+1) + diphosphate. DNA-dependent RNA polymerase catalyzes the transcription of DNA into RNA using the four ribonucleoside triphosphates as substrates. The sequence is that of DNA-directed RNA polymerase subunit beta from Rickettsia bellii (strain OSU 85-389).